Consider the following 228-residue polypeptide: Lipoprotein-releasing system ATP-binding protein LolD (228 aa).

The 223-residue stretch at Ile-6 to Gln-228 folds into the ABC transporter domain. An ATP-binding site is contributed by Gly-42–Ser-49.

Belongs to the ABC transporter superfamily. Lipoprotein translocase (TC 3.A.1.125) family. The complex is composed of two ATP-binding proteins (LolD) and two transmembrane proteins (LolC and LolE).

It is found in the cell inner membrane. Its function is as follows. Part of the ABC transporter complex LolCDE involved in the translocation of mature outer membrane-directed lipoproteins, from the inner membrane to the periplasmic chaperone, LolA. Responsible for the formation of the LolA-lipoprotein complex in an ATP-dependent manner. This Saccharophagus degradans (strain 2-40 / ATCC 43961 / DSM 17024) protein is Lipoprotein-releasing system ATP-binding protein LolD.